A 352-amino-acid polypeptide reads, in one-letter code: Transcription factor MYB86 (352 aa).

2 HTH myb-type domains span residues 9 to 61 (KQKL…INYL) and 62 to 116 (RPDL…KKKL). 2 consecutive DNA-binding regions (H-T-H motif) follow at residues 37–61 (WSSVPKLAGLQRCGKSCRLRWINYL) and 89–112 (WSQIATRLPGRTDNEIKNFWNSCL).

As to expression, expressed in stems, flowers and seeds. Weakly expressed in leaves and roots.

It localises to the nucleus. Functionally, probable transcription factor. The protein is Transcription factor MYB86 (MYB86) of Arabidopsis thaliana (Mouse-ear cress).